A 423-amino-acid polypeptide reads, in one-letter code: Gamma-glutamyl phosphate reductase (423 aa).

This sequence belongs to the gamma-glutamyl phosphate reductase family.

It localises to the cytoplasm. It carries out the reaction L-glutamate 5-semialdehyde + phosphate + NADP(+) = L-glutamyl 5-phosphate + NADPH + H(+). It participates in amino-acid biosynthesis; L-proline biosynthesis; L-glutamate 5-semialdehyde from L-glutamate: step 2/2. In terms of biological role, catalyzes the NADPH-dependent reduction of L-glutamate 5-phosphate into L-glutamate 5-semialdehyde and phosphate. The product spontaneously undergoes cyclization to form 1-pyrroline-5-carboxylate. The polypeptide is Gamma-glutamyl phosphate reductase (Burkholderia vietnamiensis (strain G4 / LMG 22486) (Burkholderia cepacia (strain R1808))).